The following is a 318-amino-acid chain: NADH-ubiquinone oxidoreductase chain 1 (318 aa).

8 helical membrane-spanning segments follow: residues 2 to 22, 68 to 88, 100 to 120, 146 to 166, 171 to 191, 222 to 242, 253 to 273, and 293 to 313; these read FMINLLLMIVPILLAVAFLTL, ISMFIIAPILALALALTMWTP, LGVLFMLAMSSLAVYSILWSG, LAIILLSVLLLNGSFTLPTLI, HMWLIIPSWPLAMMWFISTLA, LFFLAEYANIIMMNIFTTILF, ELYTINFVTKSMLLTISFLWV, and FLPLTLALCMWHVTMPIITAG.

The protein belongs to the complex I subunit 1 family. Core subunit of respiratory chain NADH dehydrogenase (Complex I) which is composed of 45 different subunits.

It localises to the mitochondrion inner membrane. It carries out the reaction a ubiquinone + NADH + 5 H(+)(in) = a ubiquinol + NAD(+) + 4 H(+)(out). Functionally, core subunit of the mitochondrial membrane respiratory chain NADH dehydrogenase (Complex I) which catalyzes electron transfer from NADH through the respiratory chain, using ubiquinone as an electron acceptor. Essential for the catalytic activity and assembly of complex I. In Hipposideros diadema (Diadem leaf-nosed bat), this protein is NADH-ubiquinone oxidoreductase chain 1 (MT-ND1).